Here is a 1068-residue protein sequence, read N- to C-terminus: Huntingtin-interacting protein 1-related protein (1068 aa).

N-acetylmethionine is present on Met1. Residues 23–151 (EREQFDKTQA…SFHLKHPQFP (129 aa)) form the ENTH domain. Residues 346 to 644 (GSMKDDRDLQ…LQDAVSKLDD (299 aa)) adopt a coiled-coil conformation. The segment at 582–610 (EALSQEQQRSSQEKGELRGQLAEKESQEQ) is disordered. A compositionally biased stretch (basic and acidic residues) spans 592 to 608 (SQEKGELRGQLAEKESQ). The I/LWEQ domain occupies 771–1012 (SLDVRQEELG…ELRKQHYVLA (242 aa)). Positions 867–924 (RWTEGLISASKAVGWGATQLVESADKVVLHMGKYEELIVCSHEIAASTAQLVAASKVK) are important for actin binding. Positions 1011-1068 (LAGGMGTPSEEEPSRPSPAPRSGATKKPPLAQKPSIAPRTDNQLDKKDGVYPAQLVNY) are disordered.

Belongs to the SLA2 family. As to quaternary structure, homodimer. Interacts with actin; homodimerization promotes actin binding. Interacts with CLTB. Interacts with HIP1. Interacts (via ENTH and I/LWEQ domains) with BCL2L10. In terms of tissue distribution, widely expressed. Expressed at lower levels in skeletal muscle and heart. The level of expression does not change appreciably during development.

Its subcellular location is the cytoplasm. The protein localises to the perinuclear region. It is found in the endomembrane system. It localises to the cytoplasmic vesicle. The protein resides in the clathrin-coated vesicle membrane. Functionally, component of clathrin-coated pits and vesicles, that may link the endocytic machinery to the actin cytoskeleton. Binds 3-phosphoinositides (via ENTH domain). May act through the ENTH domain to promote cell survival by stabilizing receptor tyrosine kinases following ligand-induced endocytosis. The polypeptide is Huntingtin-interacting protein 1-related protein (Hip1r) (Mus musculus (Mouse)).